Consider the following 449-residue polypeptide: Aminopeptidase C (449 aa).

Active-site residues include cysteine 70, histidine 364, and asparagine 385.

The protein belongs to the peptidase C1 family. Homohexamer.

It localises to the cytoplasm. It catalyses the reaction Inactivates bleomycin B2 (a cytotoxic glycometallopeptide) by hydrolysis of a carboxyamide bond of beta-aminoalanine, but also shows general aminopeptidase activity. The specificity varies somewhat with source, but amino acid arylamides of Met, Leu and Ala are preferred.. This is Aminopeptidase C (pepC) from Lactobacillus helveticus (Lactobacillus suntoryeus).